The chain runs to 827 residues: Leucine--tRNA ligase (827 aa).

The 'HIGH' region motif lies at 42-52 (PYPSGNLHMGH). A 'KMSKS' region motif is present at residues 583–587 (KMSKS). Lysine 586 provides a ligand contact to ATP.

This sequence belongs to the class-I aminoacyl-tRNA synthetase family.

Its subcellular location is the cytoplasm. It catalyses the reaction tRNA(Leu) + L-leucine + ATP = L-leucyl-tRNA(Leu) + AMP + diphosphate. This is Leucine--tRNA ligase from Desulfitobacterium hafniense (strain DSM 10664 / DCB-2).